The following is a 152-amino-acid chain: D-aminoacyl-tRNA deacylase (152 aa).

Residues 137–138 (GP) carry the Gly-cisPro motif, important for rejection of L-amino acids motif.

Belongs to the DTD family. In terms of assembly, homodimer.

It localises to the cytoplasm. It carries out the reaction glycyl-tRNA(Ala) + H2O = tRNA(Ala) + glycine + H(+). It catalyses the reaction a D-aminoacyl-tRNA + H2O = a tRNA + a D-alpha-amino acid + H(+). In terms of biological role, an aminoacyl-tRNA editing enzyme that deacylates mischarged D-aminoacyl-tRNAs. Also deacylates mischarged glycyl-tRNA(Ala), protecting cells against glycine mischarging by AlaRS. Acts via tRNA-based rather than protein-based catalysis; rejects L-amino acids rather than detecting D-amino acids in the active site. By recycling D-aminoacyl-tRNA to D-amino acids and free tRNA molecules, this enzyme counteracts the toxicity associated with the formation of D-aminoacyl-tRNA entities in vivo and helps enforce protein L-homochirality. The chain is D-aminoacyl-tRNA deacylase from Aromatoleum aromaticum (strain DSM 19018 / LMG 30748 / EbN1) (Azoarcus sp. (strain EbN1)).